A 243-amino-acid polypeptide reads, in one-letter code: Triosephosphate isomerase (243 aa).

9–11 (NWK) is a binding site for substrate. H96 functions as the Electrophile in the catalytic mechanism. The Proton acceptor role is filled by E165. Residues G171, S204, and 225-226 (GG) contribute to the substrate site.

The protein belongs to the triosephosphate isomerase family. As to quaternary structure, homodimer.

It localises to the cytoplasm. It carries out the reaction D-glyceraldehyde 3-phosphate = dihydroxyacetone phosphate. It participates in carbohydrate biosynthesis; gluconeogenesis. It functions in the pathway carbohydrate degradation; glycolysis; D-glyceraldehyde 3-phosphate from glycerone phosphate: step 1/1. Its function is as follows. Involved in the gluconeogenesis. Catalyzes stereospecifically the conversion of dihydroxyacetone phosphate (DHAP) to D-glyceraldehyde-3-phosphate (G3P). The sequence is that of Triosephosphate isomerase from Parasynechococcus marenigrum (strain WH8102).